A 145-amino-acid chain; its full sequence is Pleckstrin homology domain-containing protein 1 (145 aa).

Residues 26–127 (NPERSGWLTK…WINSIGRSIV (102 aa)) enclose the PH domain. Residues 29 to 53 (RSGWLTKQGDYIKTWRRRWFVLKRG) are binds specifically PtdIns3P.

Binds PtdIns3P. In terms of tissue distribution, ubiquitously expressed.

It is found in the cytoplasm. In terms of biological role, binds specifically to phosphatidylinositol 3-phosphate (PtdIns3P), but not to other phosphoinositides. This Arabidopsis thaliana (Mouse-ear cress) protein is Pleckstrin homology domain-containing protein 1 (PH1).